The following is a 164-amino-acid chain: Proline-rich protein 2 (164 aa).

Residues 1-21 (MNLKVGIAVLIIALIVPSAQP) form the signal peptide.

Component of the acid-soluble organic matrix of calcified layers of the shell (at protein level).

Its subcellular location is the secreted. The sequence is that of Proline-rich protein 2 from Lottia gigantea (Giant owl limpet).